A 552-amino-acid polypeptide reads, in one-letter code: Protoheme IX farnesyltransferase, mitochondrial (552 aa).

The tract at residues 118 to 185 (AADIPPSTST…PSGEIPPDAS (68 aa)) is disordered. The segment covering 150–168 (EQAASASSNAPSEAAQTTP) has biased composition (low complexity). A run of 8 helical transmembrane segments spans residues 215 to 235 (LTML…VPDF), 245 to 267 (LSPL…ANAL), 296 to 316 (AAVC…QFGV), 318 to 338 (PTVA…YTPL), 346 to 366 (TWVG…AAAG), 387 to 407 (AGGW…FMAL), 441 to 461 (VFVP…SFAV), and 487 to 507 (ARGL…LALL).

This sequence belongs to the UbiA prenyltransferase family.

Its subcellular location is the mitochondrion membrane. It catalyses the reaction heme b + (2E,6E)-farnesyl diphosphate + H2O = Fe(II)-heme o + diphosphate. Its function is as follows. Converts protoheme IX and farnesyl diphosphate to heme O. In Pyricularia oryzae (strain 70-15 / ATCC MYA-4617 / FGSC 8958) (Rice blast fungus), this protein is Protoheme IX farnesyltransferase, mitochondrial (COX10).